Here is a 199-residue protein sequence, read N- to C-terminus: Thymidine kinase (199 aa).

Residues 9-16 (GAMSSGKT) and 93-96 (DEAQ) each bind ATP. Residue Glu-94 is the Proton acceptor of the active site. Zn(2+)-binding residues include Cys-151, Cys-154, Cys-188, and His-191.

This sequence belongs to the thymidine kinase family. In terms of assembly, homotetramer.

It localises to the cytoplasm. The catalysed reaction is thymidine + ATP = dTMP + ADP + H(+). The sequence is that of Thymidine kinase from Lactobacillus acidophilus (strain ATCC 700396 / NCK56 / N2 / NCFM).